We begin with the raw amino-acid sequence, 173 residues long: Large ribosomal subunit protein uL10 (173 aa).

It belongs to the universal ribosomal protein uL10 family. As to quaternary structure, part of the ribosomal stalk of the 50S ribosomal subunit. The N-terminus interacts with L11 and the large rRNA to form the base of the stalk. The C-terminus forms an elongated spine to which L12 dimers bind in a sequential fashion forming a multimeric L10(L12)X complex.

Functionally, forms part of the ribosomal stalk, playing a central role in the interaction of the ribosome with GTP-bound translation factors. The protein is Large ribosomal subunit protein uL10 of Desulfatibacillum aliphaticivorans.